The chain runs to 620 residues: 1-deoxy-D-xylulose-5-phosphate synthase (620 aa).

Thiamine diphosphate contacts are provided by residues His80 and 121 to 123 (GHS). Asp152 is a binding site for Mg(2+). Thiamine diphosphate-binding positions include 153–154 (GA), Asn181, Tyr288, and Glu370. Residue Asn181 participates in Mg(2+) binding.

The protein belongs to the transketolase family. DXPS subfamily. Homodimer. Mg(2+) serves as cofactor. Requires thiamine diphosphate as cofactor.

The catalysed reaction is D-glyceraldehyde 3-phosphate + pyruvate + H(+) = 1-deoxy-D-xylulose 5-phosphate + CO2. It functions in the pathway metabolic intermediate biosynthesis; 1-deoxy-D-xylulose 5-phosphate biosynthesis; 1-deoxy-D-xylulose 5-phosphate from D-glyceraldehyde 3-phosphate and pyruvate: step 1/1. Its function is as follows. Catalyzes the acyloin condensation reaction between C atoms 2 and 3 of pyruvate and glyceraldehyde 3-phosphate to yield 1-deoxy-D-xylulose-5-phosphate (DXP). This Escherichia coli O139:H28 (strain E24377A / ETEC) protein is 1-deoxy-D-xylulose-5-phosphate synthase.